A 293-amino-acid polypeptide reads, in one-letter code: Bifunctional protein FolD (293 aa).

NADP(+) contacts are provided by residues 162-164 (GQS) and Ile-227.

Belongs to the tetrahydrofolate dehydrogenase/cyclohydrolase family. As to quaternary structure, homodimer.

It carries out the reaction (6R)-5,10-methylene-5,6,7,8-tetrahydrofolate + NADP(+) = (6R)-5,10-methenyltetrahydrofolate + NADPH. It catalyses the reaction (6R)-5,10-methenyltetrahydrofolate + H2O = (6R)-10-formyltetrahydrofolate + H(+). Its pathway is one-carbon metabolism; tetrahydrofolate interconversion. In terms of biological role, catalyzes the oxidation of 5,10-methylenetetrahydrofolate to 5,10-methenyltetrahydrofolate and then the hydrolysis of 5,10-methenyltetrahydrofolate to 10-formyltetrahydrofolate. The chain is Bifunctional protein FolD from Metamycoplasma arthritidis (strain 158L3-1) (Mycoplasma arthritidis).